We begin with the raw amino-acid sequence, 166 residues long: Large ribosomal subunit protein uL10 (166 aa).

It belongs to the universal ribosomal protein uL10 family. As to quaternary structure, part of the ribosomal stalk of the 50S ribosomal subunit. The N-terminus interacts with L11 and the large rRNA to form the base of the stalk. The C-terminus forms an elongated spine to which L12 dimers bind in a sequential fashion forming a multimeric L10(L12)X complex.

Forms part of the ribosomal stalk, playing a central role in the interaction of the ribosome with GTP-bound translation factors. In Bacillus cereus (strain G9842), this protein is Large ribosomal subunit protein uL10.